Consider the following 1058-residue polypeptide: Carbamoyl phosphate synthase large chain (1058 aa).

Residues Met1–Glu401 form a carboxyphosphate synthetic domain region. Arg129, Arg169, Gly175, Gly176, Arg208, Ile210, Glu215, Gly241, Ile242, His243, Gln284, and Glu298 together coordinate ATP. An ATP-grasp 1 domain is found at Lys133–Val327. The Mg(2+) site is built by Gln284, Glu298, and Asn300. Residues Gln284, Glu298, and Asn300 each coordinate Mn(2+). Residues Ile402–Ser546 form an oligomerization domain region. Residues Val547–Asn929 are carbamoyl phosphate synthetic domain. In terms of domain architecture, ATP-grasp 2 spans Glu671–Leu861. The ATP site is built by Arg707, Ser746, Ile748, Glu752, Gly777, Val778, His779, Ser780, Gln820, and Glu832. Mg(2+)-binding residues include Gln820, Glu832, and Asn834. 3 residues coordinate Mn(2+): Gln820, Glu832, and Asn834. An MGS-like domain is found at Ser930–Ile1058. Residues Ser930–Ile1058 are allosteric domain.

This sequence belongs to the CarB family. As to quaternary structure, composed of two chains; the small (or glutamine) chain promotes the hydrolysis of glutamine to ammonia, which is used by the large (or ammonia) chain to synthesize carbamoyl phosphate. Tetramer of heterodimers (alpha,beta)4. Mg(2+) is required as a cofactor. Requires Mn(2+) as cofactor.

It carries out the reaction hydrogencarbonate + L-glutamine + 2 ATP + H2O = carbamoyl phosphate + L-glutamate + 2 ADP + phosphate + 2 H(+). The enzyme catalyses hydrogencarbonate + NH4(+) + 2 ATP = carbamoyl phosphate + 2 ADP + phosphate + 2 H(+). Its pathway is amino-acid biosynthesis; L-arginine biosynthesis; carbamoyl phosphate from bicarbonate: step 1/1. It functions in the pathway pyrimidine metabolism; UMP biosynthesis via de novo pathway; (S)-dihydroorotate from bicarbonate: step 1/3. Its function is as follows. Large subunit of the glutamine-dependent carbamoyl phosphate synthetase (CPSase). CPSase catalyzes the formation of carbamoyl phosphate from the ammonia moiety of glutamine, carbonate, and phosphate donated by ATP, constituting the first step of 2 biosynthetic pathways, one leading to arginine and/or urea and the other to pyrimidine nucleotides. The large subunit (synthetase) binds the substrates ammonia (free or transferred from glutamine from the small subunit), hydrogencarbonate and ATP and carries out an ATP-coupled ligase reaction, activating hydrogencarbonate by forming carboxy phosphate which reacts with ammonia to form carbamoyl phosphate. This Streptococcus pyogenes serotype M18 (strain MGAS8232) protein is Carbamoyl phosphate synthase large chain.